Consider the following 482-residue polypeptide: NADH-quinone oxidoreductase subunit D (482 aa).

The span at 1-16 (MTTNTSTSSTTDDLTT) shows a compositional bias: low complexity. A disordered region spans residues 1–48 (MTTNTSTSSTTDDLTTGAPNGTGAPDGANGVGGPTGTVGGPGEHPAYE). Residues 29-42 (NGVGGPTGTVGGPG) show a composition bias toward gly residues.

The protein belongs to the complex I 49 kDa subunit family. As to quaternary structure, NDH-1 is composed of 14 different subunits. Subunits NuoB, C, D, E, F, and G constitute the peripheral sector of the complex.

The protein localises to the cell membrane. The catalysed reaction is a quinone + NADH + 5 H(+)(in) = a quinol + NAD(+) + 4 H(+)(out). NDH-1 shuttles electrons from NADH, via FMN and iron-sulfur (Fe-S) centers, to quinones in the respiratory chain. The immediate electron acceptor for the enzyme in this species is believed to be a menaquinone. Couples the redox reaction to proton translocation (for every two electrons transferred, four hydrogen ions are translocated across the cytoplasmic membrane), and thus conserves the redox energy in a proton gradient. In Frankia casuarinae (strain DSM 45818 / CECT 9043 / HFP020203 / CcI3), this protein is NADH-quinone oxidoreductase subunit D.